The sequence spans 239 residues: Non-classical arabinogalactan protein 30 (239 aa).

A signal peptide spans 1 to 24 (MGIIGKSVSLTLFALLCFTSSVFT). Asparagine 106 carries an N-linked (GlcNAc...) asparagine glycan.

This sequence belongs to the non-classical AGP family. In terms of tissue distribution, specifically expressed in root tips.

It is found in the secreted. The protein localises to the cell wall. Proteoglycan required for the timing of seed germination. May function in the abscisic acid (ABA) response. This Arabidopsis thaliana (Mouse-ear cress) protein is Non-classical arabinogalactan protein 30.